The sequence spans 525 residues: Cytochrome P450 4V2 (525 aa).

The chain crosses the membrane as a helical span at residues 13–33; sequence LLLWGAASALSLAGASLVLSL. Heme is bound by residues Glu-329 and Cys-467.

Belongs to the cytochrome P450 family. Heme is required as a cofactor. Broadly expressed. Detected in heart, brain, placenta, lung, liver, skeletal muscle, kidney, pancreas, retina, retinal pigment epithelium (RPE) and lymphocytes.

The protein resides in the endoplasmic reticulum membrane. The enzyme catalyses dodecanoate + reduced [NADPH--hemoprotein reductase] + O2 = 12-hydroxydodecanoate + oxidized [NADPH--hemoprotein reductase] + H2O + H(+). It carries out the reaction tetradecanoate + reduced [NADPH--hemoprotein reductase] + O2 = 14-hydroxytetradecanoate + oxidized [NADPH--hemoprotein reductase] + H2O + H(+). It catalyses the reaction hexadecanoate + reduced [NADPH--hemoprotein reductase] + O2 = 16-hydroxyhexadecanoate + oxidized [NADPH--hemoprotein reductase] + H2O + H(+). The catalysed reaction is (5Z,8Z,11Z,14Z,17Z)-eicosapentaenoate + reduced [NADPH--hemoprotein reductase] + O2 = 20-hydroxy-(5Z,8Z,11Z,14Z,17Z)-eicosapentaenoate + oxidized [NADPH--hemoprotein reductase] + H2O + H(+). The enzyme catalyses (4Z,7Z,10Z,13Z,16Z,19Z)-docosahexaenoate + reduced [NADPH--hemoprotein reductase] + O2 = 22-hydroxy-(4Z,7Z,10Z,13Z,16Z,19Z)-docosahexaenoate + oxidized [NADPH--hemoprotein reductase] + H2O + H(+). The protein operates within lipid metabolism; fatty acid metabolism. Inhibited by N-hydroxy-N'-(4-n-butyl-2-methylphenyl formamidine)(HET0016) with an IC(50) of 38 nM. In terms of biological role, a cytochrome P450 monooxygenase involved in fatty acid metabolism in the eye. Catalyzes the omega-hydroxylation of polyunsaturated fatty acids (PUFAs) docosahexaenoate (DHA) and its precursor eicosapentaenoate (EPA), and may contribute to the homeostasis of these retinal PUFAs. Omega hydroxylates saturated fatty acids such as laurate, myristate and palmitate, the catalytic efficiency decreasing in the following order: myristate &gt; laurate &gt; palmitate (C14&gt;C12&gt;C16). Mechanistically, uses molecular oxygen inserting one oxygen atom into a substrate, and reducing the second into a water molecule, with two electrons provided by NADPH via cytochrome P450 reductase (CPR; NADPH-ferrihemoprotein reductase). This Homo sapiens (Human) protein is Cytochrome P450 4V2 (CYP4V2).